Here is a 262-residue protein sequence, read N- to C-terminus: MQVDLLSSAQSAHALHLFHQHSPLVHCMTNDVVQTFTANTLLALGASPAMVIETEEASHFAAIASALLINVGTLTQPRAQAMSAAVEQATRSQTPWTLDPVAVGALDYRRRFCVELLSHKPTAIRGNASEIMALAGVANGGRGVDTTDAAANAIPAAQTLARETGAIVVVTGEVDYVTDGRRTVGIHGGDPLMTKVVGTGCALSAVVAACCALPGDTLENIASACHWMKQAGERAVARSEGPGSFVPHFLDALWQLTQEVQA.

M50 is a substrate binding site. Positions 125 and 171 each coordinate ATP. Substrate is bound at residue G198.

The protein belongs to the Thz kinase family. Mg(2+) is required as a cofactor.

It carries out the reaction 5-(2-hydroxyethyl)-4-methylthiazole + ATP = 4-methyl-5-(2-phosphooxyethyl)-thiazole + ADP + H(+). It functions in the pathway cofactor biosynthesis; thiamine diphosphate biosynthesis; 4-methyl-5-(2-phosphoethyl)-thiazole from 5-(2-hydroxyethyl)-4-methylthiazole: step 1/1. In terms of biological role, catalyzes the phosphorylation of the hydroxyl group of 4-methyl-5-beta-hydroxyethylthiazole (THZ). The sequence is that of Hydroxyethylthiazole kinase from Escherichia coli O6:K15:H31 (strain 536 / UPEC).